Consider the following 394-residue polypeptide: Ceramide synthase 4 (394 aa).

Topologically, residues 1 to 31 (MLSSFNEWFWQDRFWLPPNVTWTELEDRDGR) are lumenal. N-linked (GlcNAc...) asparagine glycosylation is present at Asn-19. A helical membrane pass occupies residues 32–52 (VYPHPQDLLAALPLALVLLAM). A homeobox-like region spans residues 67–128 (WLGVRDQTRR…RRRRNQDRPQ (62 aa)). A TLC domain is found at 131–332 (KKFCEASWRF…ILRMLYSFMK (202 aa)). The next 4 helical transmembrane spans lie at 140–160 (FLFY…ESWL), 179–199 (LYWW…RLPF), 209–229 (QVIH…ANLL), and 260–280 (VCDA…LVLF). The short motif at 291 to 301 (ESISNRGPFFG) is the Last loop motif element. Residues 304 to 324 (FFNGLLMLLQLLHVFWSCLIL) traverse the membrane as a helical segment. Over 325-394 (RMLYSFMKKG…RLTNRHTTAT (70 aa)) the chain is Cytoplasmic. Residues 341 to 394 (RSDVEESDSSEEAAAAQEPLQLKNGAAGGPRPAPTDGPRSRVAGRLTNRHTTAT) form a disordered region. Phosphoserine occurs at positions 342, 349, and 350.

Post-translationally, phosphorylated at the C-terminus by CK2. N-glycosylated.

Its subcellular location is the endoplasmic reticulum membrane. It carries out the reaction sphinganine + octadecanoyl-CoA = N-(octadecanoyl)-sphinganine + CoA + H(+). The catalysed reaction is eicosanoyl-CoA + sphinganine = N-eicosanoylsphinganine + CoA + H(+). It catalyses the reaction docosanoyl-CoA + sphinganine = N-docosanoylsphinganine + CoA + H(+). The enzyme catalyses tetracosanoyl-CoA + sphinganine = N-tetracosanoylsphinganine + CoA + H(+). It carries out the reaction hexacosanoyl-CoA + sphinganine = N-hexacosanoylsphinganine + CoA + H(+). The catalysed reaction is a fatty acyl-CoA + sphing-4-enine = an N-acylsphing-4-enine + CoA + H(+). It catalyses the reaction sphing-4-enine + octadecanoyl-CoA = N-octadecanoylsphing-4-enine + CoA + H(+). The enzyme catalyses hexadecasphinganine + octadecanoyl-CoA = N-octadecanoylhexadecasphinganine + CoA + H(+). The protein operates within lipid metabolism; sphingolipid metabolism. Its function is as follows. Ceramide synthase that catalyzes formation of ceramide from sphinganine and acyl-CoA substrates, with high selectivity toward long and very-long chains (C18:0-C22:0) as acyl donor. This Homo sapiens (Human) protein is Ceramide synthase 4.